The following is a 229-amino-acid chain: Transmembrane 4 L6 family member 20 (229 aa).

Over 1–14 (MTCCEGWTSCNGFS) the chain is Lumenal. Residues 15-35 (LLVLLLLGVVLNAIPLIVSLV) form a helical membrane-spanning segment. Topologically, residues 36–44 (EEDQFSQNP) are cytoplasmic. Residues 45 to 65 (ISCFEWWFPGIIGAGLMAIPA) traverse the membrane as a helical segment. At 66-83 (TTMSLTARKRACCNNRTG) the chain is on the lumenal side. A helical transmembrane segment spans residues 84–104 (MFLSSLFSVITVIGALYCMLI). Residues 105 to 185 (SIQALLKGPL…HFDSEENKHR (81 aa)) are Cytoplasmic-facing. Residues 186 to 206 (LIHFSVFLGLLLVGILEVLFG) form a helical membrane-spanning segment. The Lumenal portion of the chain corresponds to 207–229 (LSQIVIGFLGCLCGVSKRRSQIV).

The protein belongs to the L6 tetraspanin family. Glycosylated at Asn-132, Asn-148 and Asn-163 in presence of ceramide which inverts the orientation of TM4SF20 in membranes exposing these residues to the endoplasmic reticulum lumen. In terms of processing, cleaved by signal peptidase at Ser-14 but the peptide does not act as a signal peptide. Cleavage is inhibited by ceramide which inverts the orientation of TM4SF20 in membranes exposing the N-terminus to the cytosol and not to the endoplasmic reticulum lumen. In terms of tissue distribution, expressed in the brain, with high levels in the parietal lobe, hippocampus, pons, white matter and cerebellum.

It is found in the membrane. The protein resides in the endoplasmic reticulum membrane. Polytopic transmembrane protein that inhibits regulated intramembrane proteolysis (RIP) of CREB3L1, inhibiting its activation and the induction of collagen synthesis. In response to ceramide, which alters TM4SF20 membrane topology, stimulates RIP activation of CREB3L1. Ceramide reverses the direction through which transmembrane helices are translocated into the endoplasmic reticulum membrane during translation of TM4SF20, this mechanism is called 'regulated alternative translocation' (RAT) and regulates the function of the transmembrane protein. This is Transmembrane 4 L6 family member 20 (TM4SF20) from Homo sapiens (Human).